The primary structure comprises 346 residues: GTP-binding RHO-like protein (346 aa).

Positions 1–10 (MTPNGSRRHS) are enriched in basic residues. A disordered region spans residues 1–25 (MTPNGSRRHSAYMGSPRSQHSSTME). Polar residues predominate over residues 16-25 (PRSQHSSTME). 82-89 (GDGGCGKT) provides a ligand contact to GTP. An Effector region motif is present at residues 104–112 (YVPTVFENY). Residues 130–134 (DTAGQ) and 188–191 (TKSD) contribute to the GTP site. Residues 259-294 (LGGSNGGSGNHSRHHSRNYSNVSNNRRGHLKNTSYD) are disordered. Cys-343 is subject to Cysteine methyl ester. Cys-343 carries S-geranylgeranyl cysteine lipidation. A propeptide spans 344–346 (VIL) (removed in mature form).

The protein belongs to the small GTPase superfamily. Rho family.

The protein localises to the cell membrane. The sequence is that of GTP-binding RHO-like protein (CRL1) from Candida albicans (strain WO-1) (Yeast).